Here is a 154-residue protein sequence, read N- to C-terminus: uncharacterized protein (154 aa).

Helical transmembrane passes span 54-74 and 81-101; these read FLIT…IYLL and FAFV…FFLS.

The protein resides in the cell membrane. This is an uncharacterized protein from Mycoplasma genitalium (strain ATCC 33530 / DSM 19775 / NCTC 10195 / G37) (Mycoplasmoides genitalium).